Consider the following 118-residue polypeptide: Small ribosomal subunit protein uS13 (118 aa).

The interval 99–118 is disordered; that stretch reads GQRTRTNARTRKGPRKAIKK.

The protein belongs to the universal ribosomal protein uS13 family. Part of the 30S ribosomal subunit. Forms a loose heterodimer with protein S19. Forms two bridges to the 50S subunit in the 70S ribosome.

In terms of biological role, located at the top of the head of the 30S subunit, it contacts several helices of the 16S rRNA. In the 70S ribosome it contacts the 23S rRNA (bridge B1a) and protein L5 of the 50S subunit (bridge B1b), connecting the 2 subunits; these bridges are implicated in subunit movement. Contacts the tRNAs in the A and P-sites. The protein is Small ribosomal subunit protein uS13 of Xylella fastidiosa (strain M23).